Reading from the N-terminus, the 125-residue chain is Translation initiation factor 5A (125 aa).

Position 36 is a hypusine (Lys36).

Belongs to the eIF-5A family.

It is found in the cytoplasm. Its function is as follows. Functions by promoting the formation of the first peptide bond. This Halorubrum lacusprofundi (strain ATCC 49239 / DSM 5036 / JCM 8891 / ACAM 34) protein is Translation initiation factor 5A (eIF5A).